The sequence spans 97 residues: Serine protease inhibitor Kazal-type 14 (97 aa).

The N-terminal stretch at 1-21 (MAKSFPVFSLLSFILIHLVLS) is a signal peptide. Residues 34–97 (GIIKVKCPYE…RIRFYHDGKC (64 aa)) form the Kazal-like domain. 3 disulfide bridges follow: Cys40–Cys79, Cys57–Cys76, and Cys65–Cys97. The N-linked (GlcNAc...) asparagine glycan is linked to Asn51.

It localises to the secreted. In terms of biological role, may be a serine protease inhibitor. This Homo sapiens (Human) protein is Serine protease inhibitor Kazal-type 14 (SPINK14).